A 463-amino-acid chain; its full sequence is Methionine aminopeptidase 2-2 (463 aa).

The interval methionine 1–threonine 97 is disordered. The span at aspartate 27–glycine 36 shows a compositional bias: polar residues. Acidic residues predominate over residues glycine 46–glutamate 57. Basic residues predominate over residues lysine 69 to lysine 85. Polar residues predominate over residues serine 86 to threonine 97. A substrate-binding site is contributed by histidine 215. 3 residues coordinate a divalent metal cation: aspartate 236, aspartate 247, and histidine 316. Residue histidine 324 coordinates substrate. A divalent metal cation-binding residues include glutamate 349 and glutamate 444.

It belongs to the peptidase M24A family. Methionine aminopeptidase eukaryotic type 2 subfamily. It depends on Co(2+) as a cofactor. Zn(2+) serves as cofactor. The cofactor is Mn(2+). Requires Fe(2+) as cofactor.

The protein localises to the cytoplasm. It catalyses the reaction Release of N-terminal amino acids, preferentially methionine, from peptides and arylamides.. In terms of biological role, cotranslationally removes the N-terminal methionine from nascent proteins. The N-terminal methionine is often cleaved when the second residue in the primary sequence is small and uncharged (Met-Ala-, Cys, Gly, Pro, Ser, Thr, or Val). This Neosartorya fischeri (strain ATCC 1020 / DSM 3700 / CBS 544.65 / FGSC A1164 / JCM 1740 / NRRL 181 / WB 181) (Aspergillus fischerianus) protein is Methionine aminopeptidase 2-2.